Consider the following 219-residue polypeptide: uncharacterized protein (219 aa).

This is an uncharacterized protein from Methanocaldococcus jannaschii (strain ATCC 43067 / DSM 2661 / JAL-1 / JCM 10045 / NBRC 100440) (Methanococcus jannaschii).